The following is a 346-amino-acid chain: Inositol 2-dehydrogenase/D-chiro-inositol 3-dehydrogenase (346 aa).

It belongs to the Gfo/Idh/MocA family. In terms of assembly, homotetramer.

It carries out the reaction myo-inositol + NAD(+) = scyllo-inosose + NADH + H(+). The catalysed reaction is 1D-chiro-inositol + NAD(+) = scyllo-inosine + NADH + H(+). It functions in the pathway polyol metabolism; myo-inositol degradation into acetyl-CoA; acetyl-CoA from myo-inositol: step 1/7. Its function is as follows. Involved in the oxidation of myo-inositol (MI) and D-chiro-inositol (DCI) to 2-keto-myo-inositol (2KMI or 2-inosose) and 1-keto-D-chiro-inositol (1KDCI), respectively. The chain is Inositol 2-dehydrogenase/D-chiro-inositol 3-dehydrogenase from Lacticaseibacillus casei (Lactobacillus casei).